The primary structure comprises 331 residues: Carbonic anhydrase-related protein 11 (331 aa).

The N-terminal stretch at M1–A23 is a signal peptide. The 274-residue stretch at D33–R306 folds into the Alpha-carbonic anhydrase domain. N-linked (GlcNAc...) asparagine glycans are attached at residues N118, N170, N189, and N263. The segment at R303–R331 is disordered. The span at L322–R331 shows a compositional bias: basic and acidic residues.

It belongs to the alpha-carbonic anhydrase family.

It localises to the secreted. Its function is as follows. Does not have a catalytic activity. This is Carbonic anhydrase-related protein 11 (CA11) from Sus scrofa (Pig).